A 3291-amino-acid polypeptide reads, in one-letter code: Protocadherin-16 (3291 aa).

Residues 1-35 (MQEELSVALSCPGMKSLGTLLPLLVLLGTTVPGIR) form the signal peptide. The Extracellular portion of the chain corresponds to 36–2933 (GQAGSLDLQI…PDLNLLLVGA (2898 aa)). Cadherin domains are found at residues 37–137 (QAGS…APAF), 138–249 (PQAR…APAF), 250–356 (NQSR…QPSM), 369–466 (VSEA…APAF), 476–572 (LPEV…EPQF), 573–679 (QRTF…PPQF), 680–784 (YPRE…PPIF), 785–888 (EQLQ…SPAF), 889–994 (PAPE…APRF), 995–1105 (DSPT…EPTF), 1100–1205 (SEEP…SPTF), 1218–1317 (IQVP…SPDL), 1326–1429 (VPVV…APAF), 1430–1539 (ARDP…APVF), 1539–1642 (FASP…APAF), 1643–1744 (PQQE…SPTF), 1745–1848 (GNTH…APAF), 1849–1953 (PVPS…APAF), 1976–2061 (LATL…GPRF), 2062–2164 (PRAN…APRF), 2165–2270 (LQPH…RPTI), 2270–2369 (IPQP…VPIF), 2370–2475 (SQSL…APSF), 2476–2595 (TLPH…PPVF), 2596–2699 (TRAS…GPAF), 2700–2806 (PLSL…DPVF), and 2807–2926 (LAPS…APDL). A glycan (N-linked (GlcNAc...) asparagine) is linked at asparagine 396. Residues 951 to 971 (GPPGGPPHELEVEAQDGGSPP) are disordered. An N-linked (GlcNAc...) asparagine glycan is attached at asparagine 1711. Residue asparagine 2354 is glycosylated (N-linked (GlcNAc...) asparagine). Asparagine 2562 carries N-linked (GlcNAc...) asparagine glycosylation. The helical transmembrane segment at 2934 to 2954 (VAASLGVVVVLALAALVLGLV) threads the bilayer. Residues 2955–3291 (RARSRKAEAA…EPPDDTELRI (337 aa)) lie on the Cytoplasmic side of the membrane. Positions 2978–3033 (SLQKLGREPPSPPPSEHLYHQTLPSYGGPGAGGPYPRGGSLDPSHSSGRGSAEAAE) are disordered. A compositionally biased stretch (gly residues) spans 3004 to 3013 (GGPGAGGPYP). The residue at position 3048 (serine 3048) is a Phosphoserine. Disordered regions lie at residues 3051 to 3080 (SSLAARGPDSGIQQDADGLSDTSCEPPAPD) and 3226 to 3291 (ASHR…ELRI). Residues 3237 to 3259 (SLSSAAMSPSFSPSLSPLAARSP) are compositionally biased toward low complexity. Polar residues predominate over residues 3270 to 3279 (PSASALSTES).

In terms of assembly, heterophilic interaction with FAT4; this interaction affects their respective protein levels.

It localises to the cell membrane. Its function is as follows. Calcium-dependent cell-adhesion protein. Mediates functions in neuroprogenitor cell proliferation and differentiation. The sequence is that of Protocadherin-16 (Dchs1) from Rattus norvegicus (Rat).